Here is a 505-residue protein sequence, read N- to C-terminus: Alpha-1-syntrophin (505 aa).

Residues 1–77 (MASGRRAPRT…AEPGAASPPL (77 aa)) form a disordered region. PH domains follow at residues 6-269 (RAPR…AQVN) and 293-401 (DIKR…DGCH). Positions 87-170 (RVTVRKADAG…EVVLEVKYMK (84 aa)) constitute a PDZ domain. Phosphoserine is present on residues serine 101, serine 184, serine 189, serine 193, and serine 200. Residues 180–211 (ASGTSVGWDSPPASPLQRQPSSPGPPPRDLRD) form a disordered region. Residues 449–505 (PFEKLQMSSDDGASLLFLDFGGAEGEIQLDLHSCPKTMVFIIHSFLSAKVTRLGLLA) form the SU domain. Residues 483-505 (PKTMVFIIHSFLSAKVTRLGLLA) are calmodulin-binding.

It belongs to the syntrophin family. In terms of assembly, monomer and homodimer. Interacts with the dystrophin related protein DTNA; SGCG of the dystrophin glycoprotein complex; NOS1; GRB2; GA; TGFA; MAPK12 and the sodium channel proteins SCN4A and SCN5A. Interacts with the dystrophin protein DMD in a calmodulin dependent manner and with related protein UTRN; SGCA of the dystrophin glycoprotein complex; F-actin; calmodulin and with the other members of the syntrophin family SNTB1 and SNTB2. Interacts with MYOC; regulates muscle hypertrophy. Interacts with DTNB. Post-translationally, phosphorylated by CaM-kinase II. Phosphorylation may inhibit the interaction with DMD.

Its subcellular location is the cell membrane. It is found in the sarcolemma. It localises to the cell junction. The protein localises to the cytoplasm. The protein resides in the cytoskeleton. Functionally, adapter protein that binds to and probably organizes the subcellular localization of a variety of membrane proteins. May link various receptors to the actin cytoskeleton and the extracellular matrix via the dystrophin glycoprotein complex. Plays an important role in synapse formation and in the organization of UTRN and acetylcholine receptors at the neuromuscular synapse. Binds to phosphatidylinositol 4,5-bisphosphate. The sequence is that of Alpha-1-syntrophin (SNTA1) from Bos taurus (Bovine).